The primary structure comprises 144 residues: Bacilliredoxin BH1716 (144 aa).

The protein belongs to the bacilliredoxin family.

This chain is Bacilliredoxin BH1716, found in Halalkalibacterium halodurans (strain ATCC BAA-125 / DSM 18197 / FERM 7344 / JCM 9153 / C-125) (Bacillus halodurans).